The primary structure comprises 57 residues: MTILKWALIFLVVSIIAGIFGFTGISAASADIARILFYVFVVIFVVLLILGFTIFRA.

A run of 2 helical transmembrane segments spans residues 6 to 26 and 35 to 55; these read WALI…TGIS and ILFY…FTIF.

The protein belongs to the UPF0391 family.

The protein localises to the cell membrane. This Rhodopseudomonas palustris (strain ATCC BAA-98 / CGA009) protein is UPF0391 membrane protein RPA3029.